A 509-amino-acid polypeptide reads, in one-letter code: Lanosterol 14-alpha demethylase (509 aa).

Residues 30 to 50 traverse the membrane as a helical segment; sequence GNLLSMLLIACAFTLSLVYLI. Cys-455 serves as a coordination point for heme.

The protein belongs to the cytochrome P450 family. Heme serves as cofactor. Post-translationally, ubiquitinated by MARCHF6, leading to proteasomal degradation. Ubiquitously expressed with highest levels in testis, ovary, adrenal, prostate, liver, kidney and lung.

It is found in the endoplasmic reticulum membrane. Its subcellular location is the microsome membrane. It carries out the reaction a 14alpha-methyl steroid + 3 reduced [NADPH--hemoprotein reductase] + 3 O2 = a Delta(14) steroid + formate + 3 oxidized [NADPH--hemoprotein reductase] + 4 H2O + 4 H(+). It catalyses the reaction lanosterol + 3 reduced [NADPH--hemoprotein reductase] + 3 O2 = 4,4-dimethyl-5alpha-cholesta-8,14,24-trien-3beta-ol + formate + 3 oxidized [NADPH--hemoprotein reductase] + 4 H2O + 4 H(+). The enzyme catalyses 24,25-dihydrolanosterol + 3 reduced [NADPH--hemoprotein reductase] + 3 O2 = 4,4-dimethyl-8,14-cholestadien-3beta-ol + formate + 3 oxidized [NADPH--hemoprotein reductase] + 4 H2O + 4 H(+). The catalysed reaction is a 14alpha-methyl steroid + reduced [NADPH--hemoprotein reductase] + O2 = a 14alpha-hydroxymethyl steroid + oxidized [NADPH--hemoprotein reductase] + H2O + H(+). It carries out the reaction a 14alpha-hydroxymethyl steroid + reduced [NADPH--hemoprotein reductase] + O2 = a 14alpha-formyl steroid + oxidized [NADPH--hemoprotein reductase] + 2 H2O + H(+). It catalyses the reaction a 14alpha-formyl steroid + reduced [NADPH--hemoprotein reductase] + O2 = a Delta(14) steroid + formate + oxidized [NADPH--hemoprotein reductase] + H2O + 2 H(+). The enzyme catalyses lanosterol + reduced [NADPH--hemoprotein reductase] + O2 = 32-hydroxylanosterol + oxidized [NADPH--hemoprotein reductase] + H2O + H(+). The catalysed reaction is 32-hydroxylanosterol + reduced [NADPH--hemoprotein reductase] + O2 = 32-oxolanosterol + oxidized [NADPH--hemoprotein reductase] + 2 H2O + H(+). It carries out the reaction 32-oxolanosterol + reduced [NADPH--hemoprotein reductase] + O2 = 4,4-dimethyl-5alpha-cholesta-8,14,24-trien-3beta-ol + formate + oxidized [NADPH--hemoprotein reductase] + H2O + 2 H(+). It catalyses the reaction 24,25-dihydrolanosterol + reduced [NADPH--hemoprotein reductase] + O2 = 32-hydroxy-24,25-dihydrolanosterol + oxidized [NADPH--hemoprotein reductase] + H2O + H(+). The enzyme catalyses 32-hydroxy-24,25-dihydrolanosterol + reduced [NADPH--hemoprotein reductase] + O2 = 32-oxo-24,25-dihydrolanosterol + oxidized [NADPH--hemoprotein reductase] + 2 H2O + H(+). The catalysed reaction is 32-oxo-24,25-dihydrolanosterol + reduced [NADPH--hemoprotein reductase] + O2 = 4,4-dimethyl-8,14-cholestadien-3beta-ol + formate + oxidized [NADPH--hemoprotein reductase] + H2O + 2 H(+). It participates in steroid biosynthesis; zymosterol biosynthesis; zymosterol from lanosterol: step 1/6. With respect to regulation, inhibited by azalanstat. Inhibited by azole antifungal agents ketoconazole, itraconazole and fluconazole. In terms of biological role, sterol 14alpha-demethylase that plays a critical role in the cholesterol biosynthesis pathway, being cholesterol the major sterol component in mammalian membranes as well as a precursor for bile acid and steroid hormone synthesis. Cytochrome P450 monooxygenase that catalyzes the three-step oxidative removal of the 14alpha-methyl group (C-32) of sterols such as lanosterol (lanosta-8,24-dien-3beta-ol) and 24,25-dihydrolanosterol (DHL) in the form of formate, and converts the sterols to 4,4-dimethyl-5alpha-cholesta-8,14,24-trien-3beta-ol and 4,4-dimethyl-8,14-cholestadien-3beta-ol, respectively, which are intermediates of cholesterol biosynthesis. Can also demethylate substrates not intrinsic to mammals, such as eburicol (24-methylene-24,25-dihydrolanosterol), but at a lower rate than DHL. The protein is Lanosterol 14-alpha demethylase of Homo sapiens (Human).